The following is a 118-amino-acid chain: Small ribosomal subunit protein uS13 (118 aa).

A disordered region spans residues 94–118 (GLPVRGQRTKTNARTRKGPRKPIKK).

Belongs to the universal ribosomal protein uS13 family. In terms of assembly, part of the 30S ribosomal subunit. Forms a loose heterodimer with protein S19. Forms two bridges to the 50S subunit in the 70S ribosome.

Its function is as follows. Located at the top of the head of the 30S subunit, it contacts several helices of the 16S rRNA. In the 70S ribosome it contacts the 23S rRNA (bridge B1a) and protein L5 of the 50S subunit (bridge B1b), connecting the 2 subunits; these bridges are implicated in subunit movement. Contacts the tRNAs in the A and P-sites. The chain is Small ribosomal subunit protein uS13 from Pasteurella multocida (strain Pm70).